Here is an 883-residue protein sequence, read N- to C-terminus: Phosphoenolpyruvate carboxylase (883 aa).

Catalysis depends on residues His138 and Lys546.

The protein belongs to the PEPCase type 1 family. It depends on Mg(2+) as a cofactor.

It catalyses the reaction oxaloacetate + phosphate = phosphoenolpyruvate + hydrogencarbonate. In terms of biological role, forms oxaloacetate, a four-carbon dicarboxylic acid source for the tricarboxylic acid cycle. This Salmonella gallinarum (strain 287/91 / NCTC 13346) protein is Phosphoenolpyruvate carboxylase.